The following is a 605-amino-acid chain: DNA primase (605 aa).

Residues 37–61 (CPFHADKNPSMHINPIKGFYHCFAC) form a CHC2-type zinc finger. The Toprim domain occupies 248–329 (KEIIVCEGYM…DGKVAILQGG (82 aa)). Mg(2+)-binding residues include Glu-254, Asp-298, and Asp-300.

The protein belongs to the DnaG primase family. As to quaternary structure, monomer. Interacts with DnaB. Requires Zn(2+) as cofactor. It depends on Mg(2+) as a cofactor.

It catalyses the reaction ssDNA + n NTP = ssDNA/pppN(pN)n-1 hybrid + (n-1) diphosphate.. RNA polymerase that catalyzes the synthesis of short RNA molecules used as primers for DNA polymerase during DNA replication. The polypeptide is DNA primase (Campylobacter jejuni subsp. jejuni serotype O:2 (strain ATCC 700819 / NCTC 11168)).